Here is a 366-residue protein sequence, read N- to C-terminus: UDP-N-acetylglucosamine 2-epimerase (366 aa).

His-206 is an active-site residue.

It belongs to the UDP-N-acetylglucosamine 2-epimerase family. As to quaternary structure, homodimer.

It is found in the cytoplasm. It catalyses the reaction UDP-N-acetyl-alpha-D-glucosamine = UDP-N-acetyl-alpha-D-mannosamine. Its function is as follows. Catalyzes the reversible epimerization at C-2 of UDP-N-acetylglucosamine (UDP-GlcNAc) to produce UDP-N-acetylmannosamine (UDP-ManNAc), the activated donor of ManNAc residues. The polypeptide is UDP-N-acetylglucosamine 2-epimerase (wecB) (Methanococcus maripaludis (strain DSM 14266 / JCM 13030 / NBRC 101832 / S2 / LL)).